Reading from the N-terminus, the 210-residue chain is Redox-sensing transcriptional repressor Rex (210 aa).

A DNA-binding region (H-T-H motif) is located at residues 15-54; the sequence is LYYRIFKRFNTDGIEKASSKQIADALGIDSATVRRDFSYF. Position 89 to 94 (89 to 94) interacts with NAD(+); sequence GCGNIG.

The protein belongs to the transcriptional regulatory Rex family. In terms of assembly, homodimer.

The protein resides in the cytoplasm. Modulates transcription in response to changes in cellular NADH/NAD(+) redox state. This chain is Redox-sensing transcriptional repressor Rex, found in Streptococcus agalactiae serotype Ia (strain ATCC 27591 / A909 / CDC SS700).